Reading from the N-terminus, the 83-residue chain is Hainantoxin-III 7 (83 aa).

Positions 1–21 are cleaved as a signal peptide; it reads MKASMFLALAGLVLLFVVGYA. Residues 22-48 constitute a propeptide that is removed on maturation; sequence SESEEKEFPRELLSKVFAVDDFKGEER. 3 disulfide bridges follow: cysteine 50/cysteine 65, cysteine 57/cysteine 70, and cysteine 64/cysteine 77. The residue at position 81 (leucine 81) is a Leucine amide.

It belongs to the neurotoxin 10 (Hwtx-1) family. 15 (Hntx-3) subfamily. Monomer. In terms of tissue distribution, expressed by the venom gland.

The protein resides in the secreted. Its function is as follows. Selective antagonist of neuronal tetrodotoxin (TTX)-sensitive voltage-gated sodium channels (IC(50)=1270 nM on Nav1.1/SCN1A, 270 nM on Nav1.2/SCN2A, 491 nM on Nav1.3/SCN3A and 232 nM on Nav1.7/SCN9A). This toxin suppress Nav1.7 current amplitude without significantly altering the activation, inactivation, and repriming kinetics. Short extreme depolarizations partially activate the toxin-bound channel, indicating voltage-dependent inhibition of this toxin. This toxin increases the deactivation of the Nav1.7 current after extreme depolarizations. The toxin-Nav1.7 complex is gradually dissociated upon prolonged strong depolarizations in a voltage-dependent manner, and the unbound toxin rebinds to Nav1.7 after a long repolarization. Moreover, analysis of chimeric channels showed that the DIIS3-S4 linker is critical for toxin binding to Nav1.7. These data are consistent with this toxin interacting with Nav1.7 site 4 and trapping the domain II voltage sensor in the closed state. The chain is Hainantoxin-III 7 from Cyriopagopus hainanus (Chinese bird spider).